The following is a 324-amino-acid chain: tRNA dimethylallyltransferase (324 aa).

17 to 24 (GPTASGKT) lines the ATP pocket. Residue 19–24 (TASGKT) participates in substrate binding. 3 interaction with substrate tRNA regions span residues 42-45 (DSAL), 166-170 (QRIQR), and 251-256 (RCVGYR).

Belongs to the IPP transferase family. As to quaternary structure, monomer. Requires Mg(2+) as cofactor.

It carries out the reaction adenosine(37) in tRNA + dimethylallyl diphosphate = N(6)-dimethylallyladenosine(37) in tRNA + diphosphate. Functionally, catalyzes the transfer of a dimethylallyl group onto the adenine at position 37 in tRNAs that read codons beginning with uridine, leading to the formation of N6-(dimethylallyl)adenosine (i(6)A). The protein is tRNA dimethylallyltransferase of Burkholderia pseudomallei (strain 1106a).